A 353-amino-acid polypeptide reads, in one-letter code: Phospho-N-acetylmuramoyl-pentapeptide-transferase (353 aa).

Helical transmembrane passes span F22 to A42, T65 to I85, D88 to I108, L129 to L149, P161 to S181, G192 to S212, G228 to W248, V256 to I276, I281 to V301, and K330 to I350.

The protein belongs to the glycosyltransferase 4 family. MraY subfamily. Mg(2+) serves as cofactor.

It is found in the cell inner membrane. The enzyme catalyses UDP-N-acetyl-alpha-D-muramoyl-L-alanyl-gamma-D-glutamyl-meso-2,6-diaminopimeloyl-D-alanyl-D-alanine + di-trans,octa-cis-undecaprenyl phosphate = di-trans,octa-cis-undecaprenyl diphospho-N-acetyl-alpha-D-muramoyl-L-alanyl-D-glutamyl-meso-2,6-diaminopimeloyl-D-alanyl-D-alanine + UMP. Its pathway is cell wall biogenesis; peptidoglycan biosynthesis. Functionally, catalyzes the initial step of the lipid cycle reactions in the biosynthesis of the cell wall peptidoglycan: transfers peptidoglycan precursor phospho-MurNAc-pentapeptide from UDP-MurNAc-pentapeptide onto the lipid carrier undecaprenyl phosphate, yielding undecaprenyl-pyrophosphoryl-MurNAc-pentapeptide, known as lipid I. This is Phospho-N-acetylmuramoyl-pentapeptide-transferase from Campylobacter jejuni subsp. jejuni serotype O:6 (strain 81116 / NCTC 11828).